The following is an 812-amino-acid chain: E3 UFM1-protein ligase 1 homolog (812 aa).

The disordered stretch occupies residues 389 to 495; sequence IKHSAGQGKP…KTKEDNTNIF (107 aa). Composition is skewed to basic and acidic residues over residues 403-415 and 475-491; these read SEHR…KDLG and DAKH…KEDN.

Belongs to the UFL1 family.

Its function is as follows. E3 UFM1-protein ligase that mediates ufmylation of target proteins. The protein is E3 UFM1-protein ligase 1 homolog of Oryza sativa subsp. indica (Rice).